The following is a 971-amino-acid chain: Exportin-2 (971 aa).

In terms of domain architecture, Importin N-terminal spans 29–102 (AEKFLESVEG…KANIVNLMLT (74 aa)).

Belongs to the XPO2/CSE1 family. As to quaternary structure, interacts with cftr. As to expression, detected in larval gut, liver, exocrine pancreas and part of the brain and retina at 96 hpf.

The protein resides in the cytoplasm. It localises to the nucleus. Its subcellular location is the apical cell membrane. It is found in the basal cell membrane. The protein localises to the lateral cell membrane. Export receptor for importin alpha. Mediates importin-alpha re-export from the nucleus to the cytoplasm after import substrates have been released into the nucleoplasm. Negatively regulates fluid secretion and plays a role in fluid homeostasis by down-regulating cftr activity. The chain is Exportin-2 (cse1l) from Danio rerio (Zebrafish).